The primary structure comprises 178 residues: Alkyl hydroperoxide reductase AhpD (178 aa).

Cysteine 130 functions as the Proton donor in the catalytic mechanism. A disulfide bridge links cysteine 130 with cysteine 133. The active-site Cysteine sulfenic acid (-SOH) intermediate is the cysteine 133.

Belongs to the AhpD family. In terms of assembly, homotrimer.

It carries out the reaction N(6)-[(R)-dihydrolipoyl]-L-lysyl-[lipoyl-carrier protein] + a hydroperoxide = N(6)-[(R)-lipoyl]-L-lysyl-[lipoyl-carrier protein] + an alcohol + H2O. Its function is as follows. Antioxidant protein with alkyl hydroperoxidase activity. Required for the reduction of the AhpC active site cysteine residues and for the regeneration of the AhpC enzyme activity. This is Alkyl hydroperoxide reductase AhpD from Mycobacterium marinum (strain ATCC BAA-535 / M).